We begin with the raw amino-acid sequence, 274 residues long: ATP synthase subunit a (274 aa).

Transmembrane regions (helical) follow at residues 43–63, 103–123, 149–169, 223–243, and 245–265; these read TLNI…LLVF, VIAP…MMDL, DVSI…FYSI, LIFI…LSVP, and AIFH…LTIV.

It belongs to the ATPase A chain family. In terms of assembly, F-type ATPases have 2 components, CF(1) - the catalytic core - and CF(0) - the membrane proton channel. CF(1) has five subunits: alpha(3), beta(3), gamma(1), delta(1), epsilon(1). CF(0) has three main subunits: a(1), b(2) and c(9-12). The alpha and beta chains form an alternating ring which encloses part of the gamma chain. CF(1) is attached to CF(0) by a central stalk formed by the gamma and epsilon chains, while a peripheral stalk is formed by the delta and b chains.

Its subcellular location is the cell inner membrane. Functionally, key component of the proton channel; it plays a direct role in the translocation of protons across the membrane. The chain is ATP synthase subunit a from Yersinia pestis bv. Antiqua (strain Angola).